The sequence spans 421 residues: CaM kinase-like vesicle-associated protein (421 aa).

In terms of domain architecture, Protein kinase spans 24 to 284 (YDLGQVVKSE…AQEAIAHEWI (261 aa)). The tract at residues 326–421 (ASEQGDTGAS…PQMLPQRKGY (96 aa)) is disordered. Low complexity-rich tracts occupy residues 330 to 340 (GDTGASGLAAG) and 390 to 406 (QQQA…QQAR).

The protein belongs to the protein kinase superfamily. CAMK Ser/Thr protein kinase family. As to quaternary structure, interacts with calmodulin, in the presence of calcium. Ca(2+) serves as cofactor. As to expression, ubiquitously expressed.

The protein localises to the cytoplasmic vesicle membrane. Does not appear to have detectable kinase activity. This is CaM kinase-like vesicle-associated protein (camkv) from Takifugu rubripes (Japanese pufferfish).